A 684-amino-acid polypeptide reads, in one-letter code: Calpain-14 (684 aa).

Residues 43-336 (LFEDTSFPAT…FVLLVICKLT (294 aa)) enclose the Calpain catalytic domain. Residues cysteine 101, histidine 254, and asparagine 278 contribute to the active site. The interval 337 to 503 (PGLLSQEAAQ…KHIFYEIGSN (167 aa)) is domain III. The segment at 504–517 (SGVVFSKEIEDQNE) is linker. The interval 518–683 (RQDEFFTKFF…KPEWMMMALY (166 aa)) is domain IV. 3 EF-hand domains span residues 557 to 592 (FSLE…LKLS), 586 to 621 (WKQL…AGIM), and 651 to 684 (LRVE…ALYS). Positions 570, 572, 574, 576, and 581 each coordinate Ca(2+).

This sequence belongs to the peptidase C2 family. In terms of tissue distribution, not expressed in tissues tested.

Its function is as follows. Calcium-regulated non-lysosomal thiol-protease. The chain is Calpain-14 (CAPN14) from Homo sapiens (Human).